The following is a 218-amino-acid chain: LexA repressor (218 aa).

The H-T-H motif DNA-binding region spans 28-48 (RAEIAAEFGFSSPNSAEEHLR). Active-site for autocatalytic cleavage activity residues include Ser-136 and Lys-173.

It belongs to the peptidase S24 family. Homodimer.

The catalysed reaction is Hydrolysis of Ala-|-Gly bond in repressor LexA.. In terms of biological role, represses a number of genes involved in the response to DNA damage (SOS response), including recA and lexA. In the presence of single-stranded DNA, RecA interacts with LexA causing an autocatalytic cleavage which disrupts the DNA-binding part of LexA, leading to derepression of the SOS regulon and eventually DNA repair. This chain is LexA repressor, found in Cupriavidus metallidurans (strain ATCC 43123 / DSM 2839 / NBRC 102507 / CH34) (Ralstonia metallidurans).